The sequence spans 912 residues: Accessory gland protein Acp36DE (912 aa).

The signal sequence occupies residues M1 to S23. 4 stretches are compositionally biased toward low complexity: residues Q193–S220, S230–Q255, K271–Q324, and Q521–Q544. Disordered stretches follow at residues Q193–Q255, K271–L349, T518–Q544, P638–G671, and G732–G912. Low complexity-rich tracts occupy residues G732–Q757 and Q765–T785. The span at R803–Q818 shows a compositional bias: basic and acidic residues. The span at S821–S845 shows a compositional bias: low complexity. A compositionally biased stretch (polar residues) spans E851–D861. A compositionally biased stretch (low complexity) spans Q862 to S897. The span at K898–G912 shows a compositional bias: polar residues.

Post-translationally, proteolytically cleaved by the seminal metalloprotease Semp1. Cleavage appears to take place in the mated female. In terms of tissue distribution, detected in the male accessory glands (at protein level). Produced in the accessory glands and secreted into seminal fluid.

The protein resides in the secreted. In terms of biological role, responsible for physiological and behavioral changes in mated female flies. Associates with sperm and localizes to specific regions of the female reproductive tract, including the sperm storage organs. It accelerates sperm accumulation into storage but does not mediate the entry of the first sperm into storage. Once sperm storage has initiated it seems to act as a guidance factor helping subsequent sperm move into storage, a corral concentrating sperm around the SSO entrances and/or a trigger for responses within the female that accelerate storage of sperm. The chain is Accessory gland protein Acp36DE (Acp36DE) from Drosophila melanogaster (Fruit fly).